A 342-amino-acid chain; its full sequence is L-threonine 3-dehydrogenase (342 aa).

Position 38 (C38) interacts with Zn(2+). Residues T40 and H43 each act as charge relay system in the active site. 6 residues coordinate Zn(2+): H63, E64, C93, C96, C99, and C107. Residues I175, D195, R200, 262-264, and 286-287 each bind NAD(+); these read LGI and IY.

This sequence belongs to the zinc-containing alcohol dehydrogenase family. Homotetramer. It depends on Zn(2+) as a cofactor.

The protein resides in the cytoplasm. It carries out the reaction L-threonine + NAD(+) = (2S)-2-amino-3-oxobutanoate + NADH + H(+). Its pathway is amino-acid degradation; L-threonine degradation via oxydo-reductase pathway; glycine from L-threonine: step 1/2. In terms of biological role, catalyzes the NAD(+)-dependent oxidation of L-threonine to 2-amino-3-ketobutyrate. This Burkholderia vietnamiensis (strain G4 / LMG 22486) (Burkholderia cepacia (strain R1808)) protein is L-threonine 3-dehydrogenase.